Here is a 218-residue protein sequence, read N- to C-terminus: Glutathione S-transferase Mu 3 (218 aa).

One can recognise a GST N-terminal domain in the interval 2-88 (PMTLGYWNTR…YLGRKHNLCG (87 aa)). Glutathione-binding positions include 7 to 8 (YW), 46 to 50 (WLSEK), and 59 to 60 (NL). K50 is covalently cross-linked (Glycyl lysine isopeptide (Lys-Gly) (interchain with G-Cter in SUMO2)). K69 is covalently cross-linked (Glycyl lysine isopeptide (Lys-Gly) (interchain with G-Cter in SUMO2)). 72–73 (QS) lines the glutathione pocket. The 119-residue stretch at 90 to 208 (TEEERIRVDT…KSSRFLPRPV (119 aa)) folds into the GST C-terminal domain.

The protein belongs to the GST superfamily. Mu family. Homodimer.

The protein localises to the cytoplasm. The catalysed reaction is RX + glutathione = an S-substituted glutathione + a halide anion + H(+). Its function is as follows. Conjugation of reduced glutathione to a wide number of exogenous and endogenous hydrophobic electrophiles. In Mus musculus (Mouse), this protein is Glutathione S-transferase Mu 3 (Gstm3).